The chain runs to 863 residues: Disintegrin and metalloproteinase domain-containing protein 15 (863 aa).

A signal peptide spans 1-17; sequence MRLALLWALGLLGAGSP. The propeptide occupies 18–206; it reads LPSWPLPNIG…LGQRHIRRRR (189 aa). The segment at 22-45 is disordered; that stretch reads PLPNIGGTEEQQAESEKAPREPLE. Basic and acidic residues predominate over residues 35–44; the sequence is ESEKAPREPL. Positions 177–184 match the Cysteine switch motif; sequence HTCALSWR. A Zn(2+)-binding site is contributed by cysteine 179. Topologically, residues 207 to 696 are extracellular; sequence DVVTETKTVE…QLKATSSLTT (490 aa). The region spanning 213–414 is the Peptidase M12B domain; it reads KTVELVIVAD…GMGSCLFERL (202 aa). The N-linked (GlcNAc...) asparagine glycan is linked to asparagine 237. Disulfide bonds link cysteine 323-cysteine 409, cysteine 365-cysteine 393, cysteine 367-cysteine 376, and cysteine 480-cysteine 500. A Zn(2+)-binding site is contributed by histidine 348. Glutamate 349 is an active-site residue. Residues histidine 352 and histidine 358 each contribute to the Zn(2+) site. N-linked (GlcNAc...) asparagine glycosylation is found at asparagine 389 and asparagine 392. One can recognise a Disintegrin domain in the interval 421–508; it reads AAFCGNMFVE…QCPPDVSLGD (88 aa). The short motif at 484–486 is the Cell attachment site element; sequence RGD. 2 N-linked (GlcNAc...) asparagine glycosylation sites follow: asparagine 606 and asparagine 611. 3 disulfides stabilise this stretch: cysteine 657/cysteine 667, cysteine 661/cysteine 673, and cysteine 675/cysteine 684. The 29-residue stretch at 657-685 folds into the EGF-like domain; the sequence is CRSKCHGHGVCDSNRHCYCEEGWAPPDCT. The chain crosses the membrane as a helical span at residues 697-717; it reads GLLLSLLVLLVLVMLGASYWY. 2 positions are modified to phosphotyrosine; by HCK and LCK: tyrosine 715 and tyrosine 735. Residues 718 to 863 lie on the Cytoplasmic side of the membrane; that stretch reads RARLHQRLCQ…PPPTVSSLYL (146 aa). The tract at residues 736–863 is disordered; it reads RAAQSGPSER…PPPTVSSLYL (128 aa). The segment covering 767–778 has biased composition (pro residues); it reads PAPPSRPLPPDP. The span at 779–789 shows a compositional bias: basic and acidic residues; the sequence is VSKRLQAELAD. Composition is skewed to pro residues over residues 791–800 and 813–824; these read PNPPTRPLPA and AKPPPPRKPLPA. Short sequence motifs (SH3-binding) lie at residues 815–821 and 850–856; these read PPPPRKP and RPAPPPP.

As to quaternary structure, interacts with ITAGV-ITGB3 (vitronectin receptor). Interacts with SH3GL2 and SNX9; this interaction occurs preferentially with ADAM15 precursor, rather than the processed form, suggesting it occurs in a secretory pathway compartment prior to the medial Golgi. Interacts with ITAG9-ITGB1. Interacts specifically with Src family protein-tyrosine kinases (PTKs). Interacts with SH3PXD2A. Interacts with ITAGV-ITGB1. Interacts with GRB2, HCK, ITSN1, ITSN2, LYN, MAPK1, MAPK3, NCF1, NCK1, nephrocystin, PTK6, SNX33, LCK and SRC. The cofactor is Zn(2+). Post-translationally, the precursor is cleaved by a furin endopeptidase. Phosphorylation increases association with PTKs. In terms of tissue distribution, expressed in colon and small intestine. Expressed in airway smooth muscle and glomerular mesangial cells (at protein level). Ubiquitously expressed. Overexpressed in atherosclerotic lesions. Constitutively expressed in cultured endothelium and smooth muscle. Expressed in chondrocytes. Expressed in airway smooth muscle and glomerular mesangial cells.

It localises to the endomembrane system. The protein localises to the cell junction. It is found in the adherens junction. Its subcellular location is the cell projection. The protein resides in the cilium. It localises to the flagellum. The protein localises to the cytoplasmic vesicle. It is found in the secretory vesicle. Its subcellular location is the acrosome. With respect to regulation, inhibited by hydroxamate-type metalloproteinase inhibitors such as marimastat. Inhibited by metalloproteinase inhibitor 2 (TIMP-2) and TIMP-3 at nanomolar concentrations. Not significantly inhibited by TIMP-1 at concentrations of up to 100 nM. Not activated by PMA or ionomycin. In terms of biological role, active metalloproteinase with gelatinolytic and collagenolytic activity. Plays a role in the wound healing process. Mediates both heterotypic intraepithelial cell/T-cell interactions and homotypic T-cell aggregation. Inhibits beta-1 integrin-mediated cell adhesion and migration of airway smooth muscle cells. Suppresses cell motility on or towards fibronectin possibly by driving alpha-v/beta-1 integrin (ITAGV-ITGB1) cell surface expression via ERK1/2 inactivation. Cleaves E-cadherin in response to growth factor deprivation. Plays a role in glomerular cell migration. Plays a role in pathological neovascularization. May play a role in cartilage remodeling. May be proteolytically processed, during sperm epididymal maturation and the acrosome reaction. May play a role in sperm-egg binding through its disintegrin domain. The protein is Disintegrin and metalloproteinase domain-containing protein 15 (ADAM15) of Homo sapiens (Human).